A 660-amino-acid chain; its full sequence is Replication restart protein PriA (660 aa).

The 169-residue stretch at 145-313 (IIGSEKTNVF…KNNQIKKIIM (169 aa)) folds into the Helicase ATP-binding domain. Position 158 to 165 (158 to 165 (GIPGSGKT)) interacts with ATP. The DEAH box signature appears at 256–259 (DEEH). Residues Cys370, Cys373, Cys379, Cys382, Cys397, Cys400, Cys410, and Cys413 each contribute to the Zn(2+) site. Positions 405 to 557 (KTASHCPQCE…QFYEEELDIR (153 aa)) constitute a Helicase C-terminal domain.

Belongs to the helicase family. PriA subfamily. Component of the replication restart primosome. Zn(2+) is required as a cofactor.

The catalysed reaction is Couples ATP hydrolysis with the unwinding of duplex DNA by translocating in the 3'-5' direction.. The enzyme catalyses ATP + H2O = ADP + phosphate + H(+). In terms of biological role, initiates the restart of stalled replication forks, which reloads the replicative helicase on sites other than the origin of replication. Recognizes and binds to abandoned replication forks and remodels them to uncover a helicase loading site. Promotes assembly of the primosome at these replication forks. This is Replication restart protein PriA from Borreliella burgdorferi (strain ATCC 35210 / DSM 4680 / CIP 102532 / B31) (Borrelia burgdorferi).